We begin with the raw amino-acid sequence, 159 residues long: Fimbrial protein EcpB (159 aa).

Residues 1-6 (MYKQKG) constitute a propeptide, leader sequence. At F7 the chain carries N-methylphenylalanine. A helical membrane pass occupies residues 7–29 (FTLIELMIVIAIIGILAAIALPL). An intrachain disulfide couples C137 to C156.

This sequence belongs to the N-Me-Phe pilin family.

The protein localises to the fimbrium. It localises to the membrane. The chain is Fimbrial protein EcpB (ecpB) from Eikenella corrodens.